A 462-amino-acid chain; its full sequence is tRNA modification GTPase MnmE (462 aa).

Residues arginine 27, glutamate 89, and arginine 128 each coordinate (6S)-5-formyl-5,6,7,8-tetrahydrofolate. In terms of domain architecture, TrmE-type G spans 223–383 (GLKIAIVGRP…LEAAILAAVG (161 aa)). Asparagine 233 contributes to the K(+) binding site. GTP-binding positions include 233 to 238 (NVGKSS), 252 to 258 (TDLPGTT), and 277 to 280 (DTAG). Serine 237 contributes to the Mg(2+) binding site. Residues threonine 252, leucine 254, and threonine 257 each coordinate K(+). Threonine 258 provides a ligand contact to Mg(2+). Lysine 462 lines the (6S)-5-formyl-5,6,7,8-tetrahydrofolate pocket.

The protein belongs to the TRAFAC class TrmE-Era-EngA-EngB-Septin-like GTPase superfamily. TrmE GTPase family. As to quaternary structure, homodimer. Heterotetramer of two MnmE and two MnmG subunits. K(+) is required as a cofactor.

It localises to the cytoplasm. Its function is as follows. Exhibits a very high intrinsic GTPase hydrolysis rate. Involved in the addition of a carboxymethylaminomethyl (cmnm) group at the wobble position (U34) of certain tRNAs, forming tRNA-cmnm(5)s(2)U34. The protein is tRNA modification GTPase MnmE of Synechococcus elongatus (strain ATCC 33912 / PCC 7942 / FACHB-805) (Anacystis nidulans R2).